The primary structure comprises 1748 residues: MALLNVISENPLTLQPGQVIAFDHLANGEHWQWALGTVVSSDKHVVVVEQWAVNEGSCETLKHNISSEIQKEMKRMGVFQEQLSSARDKLAAIRSENEDRVSAARAVFEDAKARVASVDEVHMREVTSQACPSPVAVEVLKCVLALAQNDPTVTNCSTWDDIRMEYRRPNAIADFISADITGKTYPNAEEICSSLNEQRLSSLAASRDSEAISSLHHWVLSALAYQEAYCRLTTDTRVQEQNDAIANCIAGMKGCRLKVMKLKEELERGGTPTFGGQLTSFTKTSVQLKAPLSSVISIVGVDPSAQDCVLTDDEVGLILDKAEQTRLQINDHFSHLSNSYMEAMAELHCLSMYTSELEERRLNLQERFVFSLFTNAGKTNAPRRERIETDVGLRSVEAPRGDSANNIKDLQEIIKELSSHDERWMYRNEPTVTTKHRKSYPGREWSKVVERKPEELLSTFRTEQAAACHVPEDAIRNIEFTATSEKLQVSFDVQHPVKQTAAEINKRLQEFPSRGMDRMLCDVDQPKKGLDRAIVEVCRAFDLREHAFRGMTFDKFIEEVAMKGRVGDKDAYESEIGDLLMLLDKIHNENRSLQYTLEKSAEEFRRQTASTMREQESLRQRNGELHAEIGRLRDLVEKLRDLADNQASELELLKLQKTQANQIRAQRNLSTFRGDDTAEPVYCVTLDELREQTEHCDQVERELERQREQCQNLLNAQDDLLAELSGVSEEKEKLEAECERLEAELRQMEEKSRLSEQGLSEMTQRLEEKQAEIEGLLENLEQLDEQLEALRAAEKSAQAHIEARDREISDLQQRLEGEIDDHIKTTALLEELRKHYNNLEELFDKQEAELMAYREKRQNAHKVRSLEPTLRPIGTQTKPFQEVVSADEISSEPLLSVTLDEYNDHMHRSNQFQQENDLLRQQLQQANDERENLHDRLEQLMAENQSLSEQLHNMHEELEREERDRSGVTLQNERLAEEIQRKTAENEQLVLENNKSRSDIRNLNVQVQRLMEELELKAAENEKLAEELELKAAENEKLAEELELKAAENEKLAEALDLKAAENEKLAEELELKVAENEKLAEELELKVAENEKLAEELELKAAENEKLAEELELKAAENEKLAEELELKAAENEKLAEELELKAAENEKLAEALDLKAAENEKLAEELDLKAAENEKLAEELELKVAENEKLAEELELKAAENEKLAEELELKAAENEKLAEELELKAAENEKLAEELELKVAENEKLAEELELKAAENEKLAEELELKAAENEKLAEELELKAAENEKLAEELELKVAENEKLAEELELKAAENEKLAEELELKAAENEKLAEELELKAAENEKLAEELELKAAENEKLAEELELKAAENEKLAEELELKAAENEKLAEELELKAAENEKLAEELELKAAENEKLAEELELKAAENEKLAEELELKAAENEKLAEELELKAAENEKLAEELELKAAENEKLAEELELKAAENEKLAEELELKAAENEKLAEELELKAAENEKLAEELELKAAENEKLAEELELKAAENEKLAEELELKVAENEKLAEELELKVAENEKLAEELELKVAENKRLAEEVTQRLSEKELLAEDTSARLLEADSANSALQCKVKHLEEKLTLLSSEKETALATLEAEIVDLLTQLKGLNGTNSALESLCASKEKELVFLREHCELWTDPTTKKEKVITRHVKVFDGNEWMKLITDRPEALMSAFVIDAGNACHVPGDQIHEVSFLNNKEKH.

Coiled-coil stretches lie at residues 613-657 (REQE…KLQK), 684-864 (VTLD…HKVR), and 903-1663 (NDHM…SALE). 41 repeat units span residues 1012 to 1025 (EELE…EKLA), 1026 to 1039 (EELE…EKLA), 1040 to 1053 (EELE…EKLA), 1054 to 1067 (EALD…EKLA), 1068 to 1081 (EELE…EKLA), 1082 to 1095 (EELE…EKLA), 1096 to 1109 (EELE…EKLA), 1110 to 1123 (EELE…EKLA), 1124 to 1137 (EELE…EKLA), 1138 to 1151 (EELE…EKLA), 1152 to 1165 (EALD…EKLA), 1166 to 1179 (EELD…EKLA), 1180 to 1193 (EELE…EKLA), 1194 to 1207 (EELE…EKLA), 1208 to 1221 (EELE…EKLA), 1222 to 1235 (EELE…EKLA), 1236 to 1249 (EELE…EKLA), 1250 to 1263 (EELE…EKLA), 1264 to 1277 (EELE…EKLA), 1278 to 1291 (EELE…EKLA), 1292 to 1305 (EELE…EKLA), 1306 to 1319 (EELE…EKLA), 1320 to 1333 (EELE…EKLA), 1334 to 1347 (EELE…EKLA), 1348 to 1361 (EELE…EKLA), 1362 to 1375 (EELE…EKLA), 1376 to 1389 (EELE…EKLA), 1390 to 1403 (EELE…EKLA), 1404 to 1417 (EELE…EKLA), 1418 to 1431 (EELE…EKLA), 1432 to 1445 (EELE…EKLA), 1446 to 1459 (EELE…EKLA), 1460 to 1473 (EELE…EKLA), 1474 to 1487 (EELE…EKLA), 1488 to 1501 (EELE…EKLA), 1502 to 1515 (EELE…EKLA), 1516 to 1529 (EELE…EKLA), 1530 to 1543 (EELE…EKLA), 1544 to 1557 (EELE…EKLA), 1558 to 1571 (EELE…EKLA), and 1572 to 1585 (EELE…KRLA). Positions 1012–1529 (EELELKAAEN…LKAAENEKLA (518 aa)) are 41 X 14 AA tandem repeats of E-E-L-E-L-K-[VA]-A-E-N-E-K-L-A.

The protein localises to the cell projection. It localises to the cilium. It is found in the flagellum. Functionally, a component of FAZ filament that is required for correct FAZ assembly and attachment. Not essential for new flagellum growth. The chain is Flagellar attachment zone protein 1 from Trypanosoma brucei gambiense (strain MHOM/CI/86/DAL972).